A 141-amino-acid polypeptide reads, in one-letter code: Hemoglobin subunit alpha-D (141 aa).

The Globin domain maps to 1–141; sequence MLTAEDKKLI…VAAVLAEKYR (141 aa). 2 residues coordinate heme b: H58 and H87.

This sequence belongs to the globin family. In terms of assembly, heterotetramer of two alpha-D chains and two beta chains. Red blood cells.

Functionally, involved in oxygen transport from the lung to the various peripheral tissues. In Cairina moschata (Muscovy duck), this protein is Hemoglobin subunit alpha-D (HBAD).